Reading from the N-terminus, the 64-residue chain is MYLQCYINEKGEKVYTTKKESPLGLATESAHPARFSPDDKYSKQRVLLKKRFGLLPTQNAPLQY.

It belongs to the NOP10 family. In terms of assembly, component of the small nucleolar ribonucleoprotein particles containing H/ACA-type snoRNAs (H/ACA snoRNPs).

Its subcellular location is the nucleus. The protein resides in the nucleolus. Required for ribosome biogenesis. Part of a complex which catalyzes pseudouridylation of rRNA. This involves the isomerization of uridine such that the ribose is subsequently attached to C5, instead of the normal N1. Pseudouridine ('psi') residues may serve to stabilize the conformation of rRNAs. This is H/ACA ribonucleoprotein complex subunit 3-like protein from Arabidopsis thaliana (Mouse-ear cress).